The primary structure comprises 211 residues: MSTQTNTKSDFSELDWDKQDGLIPAVIQNHLSGKVLMLGYMDKAALEQTLATGDVTFFSRSKQRLWTKGETSGHTLKLVAIDKDCDNDSLLVQVLPNGPTCHKGTESCWLDGNAHPFLNNLAELIASRKGQSPESSYTASLFARGTKRIAQKVGEEGLETALAAATHDKEELVNEASDLMYHLLVLLEDQALSLSDITANLLARHQKAQRK.

The interval 1-117 (MSTQTNTKSD…CWLDGNAHPF (117 aa)) is phosphoribosyl-AMP cyclohydrolase. Positions 118 to 211 (LNNLAELIAS…LARHQKAQRK (94 aa)) are phosphoribosyl-ATP pyrophosphohydrolase.

This sequence in the N-terminal section; belongs to the PRA-CH family. The protein in the C-terminal section; belongs to the PRA-PH family.

It is found in the cytoplasm. It carries out the reaction 1-(5-phospho-beta-D-ribosyl)-ATP + H2O = 1-(5-phospho-beta-D-ribosyl)-5'-AMP + diphosphate + H(+). It catalyses the reaction 1-(5-phospho-beta-D-ribosyl)-5'-AMP + H2O = 1-(5-phospho-beta-D-ribosyl)-5-[(5-phospho-beta-D-ribosylamino)methylideneamino]imidazole-4-carboxamide. It participates in amino-acid biosynthesis; L-histidine biosynthesis; L-histidine from 5-phospho-alpha-D-ribose 1-diphosphate: step 2/9. Its pathway is amino-acid biosynthesis; L-histidine biosynthesis; L-histidine from 5-phospho-alpha-D-ribose 1-diphosphate: step 3/9. The protein is Histidine biosynthesis bifunctional protein HisIE of Shewanella oneidensis (strain ATCC 700550 / JCM 31522 / CIP 106686 / LMG 19005 / NCIMB 14063 / MR-1).